Here is a 365-residue protein sequence, read N- to C-terminus: Aminomethyltransferase (365 aa).

It belongs to the GcvT family. As to quaternary structure, the glycine cleavage system is composed of four proteins: P, T, L and H.

It catalyses the reaction N(6)-[(R)-S(8)-aminomethyldihydrolipoyl]-L-lysyl-[protein] + (6S)-5,6,7,8-tetrahydrofolate = N(6)-[(R)-dihydrolipoyl]-L-lysyl-[protein] + (6R)-5,10-methylene-5,6,7,8-tetrahydrofolate + NH4(+). Functionally, the glycine cleavage system catalyzes the degradation of glycine. The sequence is that of Aminomethyltransferase from Halalkalibacterium halodurans (strain ATCC BAA-125 / DSM 18197 / FERM 7344 / JCM 9153 / C-125) (Bacillus halodurans).